A 638-amino-acid chain; its full sequence is ATP-dependent zinc metalloprotease FtsH (638 aa).

Residues 1–15 lie on the Cytoplasmic side of the membrane; that stretch reads MDNNHKGPNDPNSKK. The helical transmembrane segment at 16–36 threads the bilayer; that stretch reads PLLQNPLLLIAIFGIIIFVAM. At 37-122 the chain is on the periplasmic side; it reads RVMNSDEGFG…INYSGFSESN (86 aa). A helical transmembrane segment spans residues 123-143; that stretch reads FFADILGWLLPVLVILGLWMF. At 144-638 the chain is on the cytoplasmic side; sequence MASRMQKNMG…RLVPLEEHAS (495 aa). 216–223 contacts ATP; sequence GPPGTGKT. His440 contacts Zn(2+). Residue Glu441 is part of the active site. Zn(2+) is bound by residues His444 and Asp517.

It in the central section; belongs to the AAA ATPase family. The protein in the C-terminal section; belongs to the peptidase M41 family. In terms of assembly, homohexamer. Zn(2+) is required as a cofactor.

The protein resides in the cell inner membrane. In terms of biological role, acts as a processive, ATP-dependent zinc metallopeptidase for both cytoplasmic and membrane proteins. Plays a role in the quality control of integral membrane proteins. This chain is ATP-dependent zinc metalloprotease FtsH, found in Helicobacter felis (strain ATCC 49179 / CCUG 28539 / NCTC 12436 / CS1).